Consider the following 230-residue polypeptide: MIFEKKTHIVEFVRRPNRFQGYVIIDGKEELVHVPNTGRCKEILIPGCRALIREENGQNRKTRFSLIGAYKGKNLINIDSQIPNKVVEEALINKKINGLEKYTKICREKTFGNSRFDFKLEDPLNNEYYLEVKGVTLEENGLCRFPDAPTERGTKHLLELIEVKNNNIGAGVLFLVQLENVKSFSPNDDTDPKFAAALKKAKSSGVDIFVYKCSVSENHIELSQSVELKL.

The protein belongs to the SfsA family.

The chain is Sugar fermentation stimulation protein homolog from Clostridium botulinum (strain Alaska E43 / Type E3).